The chain runs to 297 residues: uncharacterized protein (297 aa).

7 WD repeats span residues Lys12 to Glu51, Gly54 to Arg93, Gly96 to Ile135, Asp140 to Asp177, Phe179 to Ser217, Lys222 to Ser261, and Val265 to Asn297.

It belongs to the WD repeat MORG1 family.

Its subcellular location is the cytoplasm. The protein resides in the nucleus. This is an uncharacterized protein from Schizosaccharomyces pombe (strain 972 / ATCC 24843) (Fission yeast).